The following is a 234-amino-acid chain: 2-C-methyl-D-erythritol 4-phosphate cytidylyltransferase (234 aa).

The protein belongs to the IspD/TarI cytidylyltransferase family. IspD subfamily.

The enzyme catalyses 2-C-methyl-D-erythritol 4-phosphate + CTP + H(+) = 4-CDP-2-C-methyl-D-erythritol + diphosphate. Its pathway is isoprenoid biosynthesis; isopentenyl diphosphate biosynthesis via DXP pathway; isopentenyl diphosphate from 1-deoxy-D-xylulose 5-phosphate: step 2/6. Its function is as follows. Catalyzes the formation of 4-diphosphocytidyl-2-C-methyl-D-erythritol from CTP and 2-C-methyl-D-erythritol 4-phosphate (MEP). This is 2-C-methyl-D-erythritol 4-phosphate cytidylyltransferase from Pseudomonas aeruginosa (strain ATCC 15692 / DSM 22644 / CIP 104116 / JCM 14847 / LMG 12228 / 1C / PRS 101 / PAO1).